The sequence spans 634 residues: Sodium-dependent multivitamin transporter (634 aa).

The next 12 membrane-spanning stretches (helical) occupy residues 23 to 43 (FSVV…VIGL), 65 to 85 (MGCL…VAIL), 100 to 120 (FLGC…IPVF), 142 to 162 (ICGT…ALYA), 175 to 195 (LWLS…LGGL), 207 to 227 (LIMF…VGGL), 255 to 275 (FWTL…VNQA), 295 to 315 (AVFP…LVMF), 350 to 370 (LPGL…SSAF), 403 to 423 (FAYG…GSVL), 427 to 447 (LSIF…GMFF), and 455 to 475 (AIVG…GSIV). N-linked (GlcNAc...) asparagine glycosylation is found at Asn-488 and Asn-497. Residues 526-546 (LWYSAHNSTTVIAVGLIVSLL) traverse the membrane as a helical segment.

Belongs to the sodium:solute symporter (SSF) (TC 2.A.21) family. In terms of assembly, interacts with PDZD11. As to expression, expressed in the jejunum (at protein level). Expressed in lung, skeletal muscle, heart, brain, kidney, intestine, liver, and placenta.

It localises to the cell membrane. The protein localises to the apical cell membrane. The enzyme catalyses biotin(out) + 2 Na(+)(out) = biotin(in) + 2 Na(+)(in). It carries out the reaction (R)-pantothenate(out) + 2 Na(+)(out) = (R)-pantothenate(in) + 2 Na(+)(in). It catalyses the reaction (R)-lipoate(out) + 2 Na(+)(out) = (R)-lipoate(in) + 2 Na(+)(in). The catalysed reaction is iodide(out) + 2 Na(+)(out) = iodide(in) + 2 Na(+)(in). Sodium-dependent multivitamin transporter that mediates the electrogenic transport of pantothenate, biotin, lipoate and iodide. Functions as a Na(+)-coupled substrate symporter where the stoichiometry of Na(+):substrate is 2:1, creating an electrochemical Na(+) gradient used as driving force for substrate uptake. Required for biotin and pantothenate uptake in the intestine across the brush border membrane. Plays a role in the maintenance of intestinal mucosa integrity, by providing the gut mucosa with biotin. Contributes to the luminal uptake of biotin and pantothenate into the brain across the blood-brain barrier. This is Sodium-dependent multivitamin transporter from Rattus norvegicus (Rat).